We begin with the raw amino-acid sequence, 469 residues long: Adenosylhomocysteinase (469 aa).

Substrate is bound by residues threonine 63, aspartate 139, and glutamate 164. An NAD(+)-binding site is contributed by 165–167 (TTT). Lysine 194 and aspartate 198 together coordinate substrate. NAD(+) contacts are provided by residues asparagine 199, 228-233 (GYGDVG), glutamate 251, asparagine 300, 321-323 (IGH), and asparagine 375.

This sequence belongs to the adenosylhomocysteinase family. The cofactor is NAD(+).

The protein localises to the cytoplasm. The catalysed reaction is S-adenosyl-L-homocysteine + H2O = L-homocysteine + adenosine. It participates in amino-acid biosynthesis; L-homocysteine biosynthesis; L-homocysteine from S-adenosyl-L-homocysteine: step 1/1. Functionally, may play a key role in the regulation of the intracellular concentration of adenosylhomocysteine. The protein is Adenosylhomocysteinase of Pseudomonas aeruginosa (strain LESB58).